The sequence spans 87 residues: Toxin ICK-41 (87 aa).

Residues 1–19 (MKPIVYMLLFCAFTVVILG) form the signal peptide. 4 disulfides stabilise this stretch: Cys40–Cys54, Cys40–Cys77, Cys53–Cys66, and Cys80–Cys87.

Belongs to the neurotoxin 27 (Jztx-72) family. ICK-41 subfamily. As to expression, expressed by the venom gland.

It localises to the secreted. Its function is as follows. Probable neurotoxin with ion channel impairing activity. The polypeptide is Toxin ICK-41 (Trittame loki (Brush-footed trapdoor spider)).